The primary structure comprises 206 residues: Octanoyltransferase (206 aa).

Residues 30-206 (PETNDEIWLV…EFVTLLNNSI (177 aa)) form the BPL/LPL catalytic domain. Substrate-binding positions include 69–76 (RGGQVTYH), 137–139 (SLG), and 150–152 (GIA). Catalysis depends on cysteine 168, which acts as the Acyl-thioester intermediate.

It belongs to the LipB family.

The protein resides in the cytoplasm. The enzyme catalyses octanoyl-[ACP] + L-lysyl-[protein] = N(6)-octanoyl-L-lysyl-[protein] + holo-[ACP] + H(+). Its pathway is protein modification; protein lipoylation via endogenous pathway; protein N(6)-(lipoyl)lysine from octanoyl-[acyl-carrier-protein]: step 1/2. In terms of biological role, catalyzes the transfer of endogenously produced octanoic acid from octanoyl-acyl-carrier-protein onto the lipoyl domains of lipoate-dependent enzymes. Lipoyl-ACP can also act as a substrate although octanoyl-ACP is likely to be the physiological substrate. The chain is Octanoyltransferase from Francisella tularensis subsp. tularensis (strain FSC 198).